The primary structure comprises 395 residues: Fe(3+) ions import ATP-binding protein FbpC 2 (395 aa).

The disordered stretch occupies residues 1 to 21; it reads MHIAQELADETCNSPRGAGHA. The region spanning 23–264 is the ABC transporter domain; the sequence is LRYPSDRRTA…PKTLFVADFI (242 aa). 66–73 contacts ATP; sequence GPSGCGKT.

The protein belongs to the ABC transporter superfamily. Fe(3+) ion importer (TC 3.A.1.10) family. As to quaternary structure, the complex is composed of two ATP-binding proteins (FbpC), two transmembrane proteins (FbpB) and a solute-binding protein (FbpA).

The protein localises to the cell inner membrane. It carries out the reaction Fe(3+)(out) + ATP + H2O = Fe(3+)(in) + ADP + phosphate + H(+). Its function is as follows. Part of the ABC transporter complex FbpABC involved in Fe(3+) ions import. Responsible for energy coupling to the transport system. This chain is Fe(3+) ions import ATP-binding protein FbpC 2, found in Rhizobium meliloti (strain 1021) (Ensifer meliloti).